Here is a 211-residue protein sequence, read N- to C-terminus: Ribonuclease P protein component 3 (211 aa).

It belongs to the eukaryotic/archaeal RNase P protein component 3 family. In terms of assembly, consists of a catalytic RNA component and at least 4-5 protein subunits.

The protein resides in the cytoplasm. It catalyses the reaction Endonucleolytic cleavage of RNA, removing 5'-extranucleotides from tRNA precursor.. Functionally, part of ribonuclease P, a protein complex that generates mature tRNA molecules by cleaving their 5'-ends. The sequence is that of Ribonuclease P protein component 3 from Aeropyrum pernix (strain ATCC 700893 / DSM 11879 / JCM 9820 / NBRC 100138 / K1).